Here is a 269-residue protein sequence, read N- to C-terminus: Gene 51 glycoprotein (269 aa).

Asn53, Asn58, Asn74, and Asn78 each carry an N-linked (GlcNAc...) asparagine; by host glycan. 2 disordered regions span residues 67–87 (LSTS…TTPY) and 103–137 (MLNS…ASKN). Residues 76–87 (TSNTSYSQTTPY) are compositionally biased toward low complexity. Polar residues predominate over residues 103 to 112 (MLNSTPNKPL). Positions 113-136 (SSTKLTPKSQSSSQSTKTTKQASK) are enriched in low complexity. N-linked (GlcNAc...) asparagine; by host glycosylation is found at Asn137, Asn161, Asn170, and Asn191.

The sequence is that of Gene 51 glycoprotein (51) from Saimiriine herpesvirus 2 (strain 11) (SaHV-2).